The primary structure comprises 1192 residues: Coiled-coil domain-containing protein 40 (1192 aa).

Disordered stretches follow at residues 1 to 78 (MMDA…PGMD), 126 to 153 (KAKH…LEVS), 173 to 196 (SSPE…NVSA), 211 to 246 (EPIE…YQRD), and 261 to 289 (GSLT…STPR). Acidic residues predominate over residues 27–45 (PETEVEFIGETAPDTDVEF). The segment covering 215 to 228 (PTEPPEPAEPPKPA) has biased composition (pro residues). Positions 267-279 (DTDDLPLETDEPP) are enriched in acidic residues. A Phosphoserine modification is found at serine 306. Coiled-coil stretches lie at residues 308 to 369 (EALL…ATKQ), 425 to 451 (KTCQ…ALHL), 581 to 649 (DSEI…MLNK), 733 to 768 (NTNC…EIAR), 830 to 871 (LQQE…KIAH), 919 to 972 (LRTL…EMRS), and 1044 to 1118 (QQRE…IVTL).

This sequence belongs to the CCDC40 family. As to expression, specifically expressed in the embryonic node and midline.

Its subcellular location is the cytoplasm. The protein localises to the cell projection. The protein resides in the cilium. Functionally, required for assembly of dynein regulatory complex (DRC) and inner dynein arm (IDA) complexes, which are responsible for ciliary beat regulation, thereby playing a central role in motility in cilia and flagella. Probably acts together with CCDC39 to form a molecular ruler that determines the 96 nanometer (nm) repeat length and arrangements of components in cilia and flagella. Not required for outer dynein arm complexes assembly. Required for axonemal recruitment of CCDC39. This is Coiled-coil domain-containing protein 40 from Mus musculus (Mouse).